The sequence spans 194 residues: 3-isopropylmalate dehydratase small subunit (194 aa).

Belongs to the LeuD family. LeuD type 1 subfamily. In terms of assembly, heterodimer of LeuC and LeuD.

The enzyme catalyses (2R,3S)-3-isopropylmalate = (2S)-2-isopropylmalate. The protein operates within amino-acid biosynthesis; L-leucine biosynthesis; L-leucine from 3-methyl-2-oxobutanoate: step 2/4. In terms of biological role, catalyzes the isomerization between 2-isopropylmalate and 3-isopropylmalate, via the formation of 2-isopropylmaleate. In Limosilactobacillus fermentum (strain NBRC 3956 / LMG 18251) (Lactobacillus fermentum), this protein is 3-isopropylmalate dehydratase small subunit.